A 226-amino-acid chain; its full sequence is MYTLIIPAAGQGKRMGAGKNKLFLLINEVPIIVHTLRAFEKDKACKNIIMAINEEERPYFEELMQKYPVEKPVQFIQGGAERQDSVYNAIQHTTDVEYVLVHDGARPFVTNKVIQDVLTAAEKYGASICAVPVKDTVKKVEQGVVVETVERSQLKAVQTPQGFSVSLLLEAHRSAKQSCFLGTDDASLVERIGKQVGVVEGSYYNIKVTTPEDLLIAESFLHVQKK.

The protein belongs to the IspD/TarI cytidylyltransferase family. IspD subfamily.

It carries out the reaction 2-C-methyl-D-erythritol 4-phosphate + CTP + H(+) = 4-CDP-2-C-methyl-D-erythritol + diphosphate. Its pathway is isoprenoid biosynthesis; isopentenyl diphosphate biosynthesis via DXP pathway; isopentenyl diphosphate from 1-deoxy-D-xylulose 5-phosphate: step 2/6. In terms of biological role, catalyzes the formation of 4-diphosphocytidyl-2-C-methyl-D-erythritol from CTP and 2-C-methyl-D-erythritol 4-phosphate (MEP). The sequence is that of 2-C-methyl-D-erythritol 4-phosphate cytidylyltransferase from Bacillus thuringiensis (strain Al Hakam).